A 670-amino-acid polypeptide reads, in one-letter code: DNA ligase (670 aa).

NAD(+) contacts are provided by residues 34–38, 84–85, 116–119, Arg-139, Glu-174, Tyr-226, Lys-291, and Lys-315; these read DAEYD, SL, and EHKV. Catalysis depends on Lys-118, which acts as the N6-AMP-lysine intermediate. 4 residues coordinate Zn(2+): Cys-409, Cys-412, Cys-425, and Cys-430. The BRCT domain occupies 586–670; the sequence is EVSDLLSGLT…LKEKGAPVPA (85 aa).

This sequence belongs to the NAD-dependent DNA ligase family. LigA subfamily. Requires Mg(2+) as cofactor.

It carries out the reaction NAD(+) + (deoxyribonucleotide)n-3'-hydroxyl + 5'-phospho-(deoxyribonucleotide)m = (deoxyribonucleotide)n+m + AMP + beta-nicotinamide D-nucleotide.. Its function is as follows. DNA ligase that catalyzes the formation of phosphodiester linkages between 5'-phosphoryl and 3'-hydroxyl groups in double-stranded DNA using NAD as a coenzyme and as the energy source for the reaction. It is essential for DNA replication and repair of damaged DNA. The protein is DNA ligase of Thermus filiformis.